Consider the following 312-residue polypeptide: Ribosomal protein L11 methyltransferase (312 aa).

Residues Thr-159, Gly-180, Asp-201, and Asn-244 each contribute to the S-adenosyl-L-methionine site.

It belongs to the methyltransferase superfamily. PrmA family.

Its subcellular location is the cytoplasm. The catalysed reaction is L-lysyl-[protein] + 3 S-adenosyl-L-methionine = N(6),N(6),N(6)-trimethyl-L-lysyl-[protein] + 3 S-adenosyl-L-homocysteine + 3 H(+). Functionally, methylates ribosomal protein L11. This chain is Ribosomal protein L11 methyltransferase, found in Desulfitobacterium hafniense (strain DSM 10664 / DCB-2).